A 62-amino-acid polypeptide reads, in one-letter code: Small, acid-soluble spore protein A (62 aa).

Belongs to the alpha/beta-type SASP family.

In terms of biological role, SASP are bound to spore DNA. They are double-stranded DNA-binding proteins that cause DNA to change to an a-like conformation. They protect the DNA backbone from chemical and enzymatic cleavage and are thus involved in dormant spore's high resistance to UV light. In Priestia megaterium (Bacillus megaterium), this protein is Small, acid-soluble spore protein A (sasP-A).